The primary structure comprises 388 residues: Flavin-dependent monooxygenase (388 aa).

Position 54 (Arg-54) interacts with NADPH. Positions 61, 117, and 311 each coordinate FAD.

The protein belongs to the aromatic-ring hydroxylase family. TetX subfamily. In terms of assembly, monomer. It depends on FAD as a cofactor.

Its subcellular location is the cytoplasm. It carries out the reaction a tetracycline + NADPH + O2 + H(+) = an 11a-hydroxytetracycline + NADP(+) + H2O. It catalyses the reaction tetracycline + NADPH + O2 + H(+) = 11a-hydroxytetracycline + NADP(+) + H2O. The enzyme catalyses oxytetracycline + NADPH + O2 + H(+) = 11a-hydroxy-oxytetracycline + NADP(+) + H2O. Its function is as follows. An FAD-requiring monooxygenase active on some tetracycline antibiotic derivatives, which leads to their inactivation. Hydroxylates carbon 11a of tetracycline and some analogs. Functionally, confers resistance to tetracycline via an oxidoreductase activity; NADPH is more active than NAD. Expression in E.coli leads to breakdown of tetracycline. Confers resistance to doxycycline, chlortetracycline, oxytetracycline and minocycline. The protein is Flavin-dependent monooxygenase of Bacteroides fragilis.